The following is a 523-amino-acid chain: F-box only protein 31-B (523 aa).

Residues Pro59–Arg105 form the F-box domain. Residues Cys201, His209, Cys225, and His231 each coordinate Zn(2+). The disordered stretch occupies residues Ile372–Val427. 2 stretches are compositionally biased toward basic and acidic residues: residues Gly386–His396 and Pro406–Lys423.

The protein belongs to the FBXO31 family. In terms of assembly, part of a SCF (SKP1-cullin-F-box) protein ligase complex SCF(FBXO31).

The protein resides in the cytoplasm. The protein operates within protein modification; protein ubiquitination. Its function is as follows. Substrate-recognition component of the SCF(FBXO31) protein ligase complex, which specifically mediates the ubiquitination of proteins amidated at their C-terminus in response to oxidative stress, leading to their degradation by the proteasome. Fbxo31 specifically recognizes and binds C-terminal peptides bearing an amide: C-terminal amidation in response to oxidative stress takes place following protein fragmentation. The SCF(FBXO31) also plays a role in G1 arrest following DNA damage by mediating ubiquitination of phosphorylated cyclin-D1 (ccnd1), promoting its degradation by the proteasome, resulting in G1 arrest. The SCF(FBXO31) complex is however not a major regulator of ccnd1 stability during the G1/S transition. In Xenopus laevis (African clawed frog), this protein is F-box only protein 31-B (fbxo31-b).